Here is a 294-residue protein sequence, read N- to C-terminus: Mating type protein mtA-1 (294 aa).

The alpha box DNA-binding region spans Thr46 to Arg101.

The protein belongs to the MATALPHA1 family.

Its subcellular location is the nucleus. In terms of biological role, mating type proteins are sequence specific DNA-binding proteins that act as master switches in fungal differentiation by controlling gene expression in a cell type-specific fashion. Transcriptional activator that induces the transcription of alpha-specific genes. The polypeptide is Mating type protein mtA-1 (MTA1) (Sordaria equina).